Here is a 509-residue protein sequence, read N- to C-terminus: Maturase K (509 aa).

Belongs to the intron maturase 2 family. MatK subfamily.

The protein localises to the plastid. It localises to the chloroplast. In terms of biological role, usually encoded in the trnK tRNA gene intron. Probably assists in splicing its own and other chloroplast group II introns. The sequence is that of Maturase K from Anthocercis viscosa (Sticky tailflower).